A 795-amino-acid chain; its full sequence is RalBP1-associated Eps domain-containing protein 1 (795 aa).

Positions 10-113 constitute an EH 1 domain; it reads EQKYYSDLFS…SKNEQESRLA (104 aa). Residues 112 to 238 form a disordered region; that stretch reads LAASYSSDSE…NWVSFADTPP (127 aa). Residues 115-126 show a composition bias toward polar residues; sequence SYSSDSENQGSY. Phosphoserine is present on residues Ser-145, Ser-162, Ser-166, and Ser-170. Positions 156 to 168 are enriched in low complexity; the sequence is EQQEPVSPVVSPQ. A Phosphothreonine modification is found at Thr-173. Low complexity predominate over residues 205-216; sequence GDAQAGSSAGDA. Ser-272 and Ser-273 each carry phosphoserine. The region spanning 285-374 is the EH 2 domain; sequence QRQYYVNQFK…ESLMPKLIDL (90 aa). Tyr-288 carries the phosphotyrosine modification. Position 307 is a phosphoserine (Ser-307). One can recognise an EF-hand domain in the interval 318-353; that stretch reads LPILELSHIWELSDFDKDGALTLDEFCAAFHLVVAR. 4 residues coordinate Ca(2+): Asp-331, Asp-333, Asp-335, and Glu-342. 2 disordered regions span residues 380-433 and 469-720; these read VGEQ…SSQT and ELKR…DEHT. The span at 407–433 shows a compositional bias: polar residues; the sequence is LNQTWPELNQSSEQWETFSERSSSSQT. Phosphoserine occurs at positions 475, 482, and 489. Polar residues-rich tracts occupy residues 497–518 and 525–542; these read INSS…SDSF and IGSS…SPDN. Phosphoserine is present on Ser-539. The residue at position 543 (Thr-543) is a Phosphothreonine. Positions 543-553 are enriched in pro residues; the sequence is TAPPPPPPRPQ. Ser-561 is subject to Phosphoserine. A compositionally biased stretch (polar residues) spans 562–573; it reads LDMNRTFAVTTG. Residues 574–583 show a composition bias toward low complexity; the sequence is QQQAGVVAHP. Residues 584-595 show a composition bias toward pro residues; sequence PAVPPRPQPSQA. Composition is skewed to polar residues over residues 611 to 622 and 681 to 692; these read THTSTSPQQIPE and ATNVPANVSKGT. The segment at 651-795 is interaction with RALBP1; that stretch reads HPEVLPAEKA…LEQLRPFSHL (145 aa). Positions 707–720 are enriched in basic and acidic residues; sequence KSEDELRPDVDEHT. 2 positions are modified to phosphoserine: Ser-708 and Ser-739. Residues 750-790 adopt a coiled-coil conformation; the sequence is SIRRNKETNTVLARLNSELQQQLKDVLEERISLEVQLEQLR.

Homodimer (Potential). Interacts with RALBP1, CRK and GRB2. Binding to RALBP1 does not affect its Ral-binding activity. Forms a complex with the SH3 domains of CRK and GRB2 which may link it to an EGF-responsive tyrosine kinase. Interacts with RAB11FIP2. Interacts with AMPH, ITSN1 (via SH3 domains) and SGIP1; may be involved in clathrin-mediated endocytosis. In terms of processing, EGF stimulates phosphorylation on Tyr-residues. In terms of tissue distribution, expressed in all tissues examined. The highest level expression was found in the kidney and testis.

The protein localises to the membrane. It localises to the clathrin-coated pit. Its function is as follows. May coordinate the cellular actions of activated EGF receptors and Ral-GTPases. This is RalBP1-associated Eps domain-containing protein 1 (Reps1) from Mus musculus (Mouse).